A 106-amino-acid chain; its full sequence is Iron-sulfur cluster assembly protein CyaY (106 aa).

This sequence belongs to the frataxin family.

Involved in iron-sulfur (Fe-S) cluster assembly. May act as a regulator of Fe-S biogenesis. This chain is Iron-sulfur cluster assembly protein CyaY, found in Serratia proteamaculans (strain 568).